A 412-amino-acid chain; its full sequence is Palmitoyltransferase ZDHHC11 (412 aa).

Topologically, residues 1–42 are cytoplasmic; the sequence is MDTRSGSQCSVTPEAILNNEKLVLPPRISRVNGWSLPLHYFQ. A helical membrane pass occupies residues 43 to 63; that stretch reads VVTWAVFVGLSSATFGIFIPF. At 64–69 the chain is on the lumenal side; sequence LPHAWK. Residues 70-90 traverse the membrane as a helical segment; that stretch reads YIAYVVTGGIFSFHLVVHLIA. Topologically, residues 91 to 176 are cytoplasmic; the sequence is SCIDPADSNV…YWFFFSTVAS (86 aa). One can recognise a DHHC domain in the interval 125 to 175; that stretch reads QFCHLCKVTVNKKTKHCISCNKCVSGFDHHCKWINNCVGSRNYWFFFSTVA. Cysteine 155 functions as the S-palmitoyl cysteine intermediate in the catalytic mechanism. Residues 177–197 form a helical membrane-spanning segment; sequence ATAGMLCLIAILLYVLVQYLV. The Lumenal segment spans residues 198–230; sequence NPGVLRTDPRYEDVKNMNTWLLFLPLFPVQVQT. The interval 198–412 is mediates interaction with IRF3 and STING1; that stretch reads NPGVLRTDPR…MKTDSAESED (215 aa). A helical membrane pass occupies residues 231–251; that stretch reads LIVVIIGMLVLLLDFLGLVHL. The Cytoplasmic portion of the chain corresponds to 252–412; sequence GQLLIFHIYL…MKTDSAESED (161 aa). The segment at 374 to 412 is disordered; sequence HPDGGSMAQEADDAPSISTLGLQQETTEPMKTDSAESED. Residues 389–400 are compositionally biased toward polar residues; sequence SISTLGLQQETT. The span at 401-412 shows a compositional bias: basic and acidic residues; it reads EPMKTDSAESED.

This sequence belongs to the DHHC palmitoyltransferase family. Interacts with IRF3 and STING1; in presence of DNA viruses recruits IRF3 to STING1 promoting IRF3 phosphorylation and activation. In terms of tissue distribution, expressed in testis.

Its subcellular location is the endoplasmic reticulum membrane. The enzyme catalyses L-cysteinyl-[protein] + hexadecanoyl-CoA = S-hexadecanoyl-L-cysteinyl-[protein] + CoA. Functionally, endoplasmic reticulum-localized palmitoyltransferase that could catalyze the addition of palmitate onto various protein substrates and be involved in a variety of cellular processes. Has a palmitoyltransferase activity toward NCDN and regulates NCDN association with endosome membranes through this palmitoylation. May play a role in cell proliferation. In terms of biological role, also has a palmitoyltransferase activity-independent function in DNA virus-triggered and CGAS-mediated innate immune response. Functions as an adapter that recruits IRF3 to STING1 to promote the activation of that key transcriptional regulator of type I interferon (IFN)-dependent immune response. The polypeptide is Palmitoyltransferase ZDHHC11 (Homo sapiens (Human)).